A 291-amino-acid polypeptide reads, in one-letter code: Gamma-soluble NSF attachment protein (291 aa).

Belongs to the SNAP family.

The protein localises to the membrane. Functionally, required for vesicular transport between the endoplasmic reticulum and the Golgi apparatus. Binds to SNARE complex and then recruits NSF to disassemble it. In Arabidopsis thaliana (Mouse-ear cress), this protein is Gamma-soluble NSF attachment protein (GSNAP).